The sequence spans 252 residues: Type III pantothenate kinase (252 aa).

6 to 13 (DIGNTTTE) provides a ligand contact to ATP. Residues tyrosine 100 and 107-110 (GADR) each bind substrate. Residue aspartate 109 is the Proton acceptor of the active site. Aspartate 129 is a binding site for K(+). An ATP-binding site is contributed by threonine 132. Residue threonine 184 coordinates substrate.

It belongs to the type III pantothenate kinase family. Homodimer. NH4(+) is required as a cofactor. The cofactor is K(+).

It is found in the cytoplasm. The catalysed reaction is (R)-pantothenate + ATP = (R)-4'-phosphopantothenate + ADP + H(+). Its pathway is cofactor biosynthesis; coenzyme A biosynthesis; CoA from (R)-pantothenate: step 1/5. Its function is as follows. Catalyzes the phosphorylation of pantothenate (Pan), the first step in CoA biosynthesis. This chain is Type III pantothenate kinase, found in Sulfurihydrogenibium sp. (strain YO3AOP1).